A 629-amino-acid chain; its full sequence is Pentatricopeptide repeat-containing protein At1g62930, chloroplastic (629 aa).

Residues Met-1–Ser-41 constitute a chloroplast transit peptide. PPR repeat units follow at residues Ser-79–Tyr-113, Asp-114–Pro-148, Asp-149–Pro-183, Asn-184–Pro-218, Asp-219–Ala-253, Asp-254–Pro-288, Asn-289–Pro-323, Asn-324–Pro-358, Asp-359–Pro-393, Asn-394–Gly-428, Asn-429–Pro-463, Asp-464–Pro-498, Asp-499–Pro-533, Asn-534–Pro-568, and Asn-569–Gly-603.

It belongs to the PPR family. P subfamily.

The protein resides in the plastid. It is found in the chloroplast. This Arabidopsis thaliana (Mouse-ear cress) protein is Pentatricopeptide repeat-containing protein At1g62930, chloroplastic.